The chain runs to 38 residues: Defensin D7 (38 aa).

It belongs to the DEFL family. Group IV subfamily. In terms of tissue distribution, distributed in the epidermal cell layer of leaves and in the subepidermal layer region of stems. Not in roots.

The protein resides in the secreted. The protein localises to the cell wall. Antimicrobial peptide. Active against Fusarium spp., Gram-positive and Gram-negative bacterial pathogens. This Spinacia oleracea (Spinach) protein is Defensin D7.